Consider the following 272-residue polypeptide: Sugar-phosphatase AraL (272 aa).

It belongs to the HAD-like hydrolase superfamily. Mg(2+) serves as cofactor.

It carries out the reaction sugar phosphate + H2O = sugar + phosphate.. It catalyses the reaction O-phospho-L-serine + H2O = L-serine + phosphate. The enzyme catalyses O-phospho-D-serine + H2O = D-serine + phosphate. Its function is as follows. Catalyzes the dephosphorylation of C5 and C6 carbon sugars in vitro. Catalyzes the dephosphorylation of 3'-AMP and phosphoserine in vitro. This Bacillus subtilis (strain 168) protein is Sugar-phosphatase AraL (araL).